A 291-amino-acid polypeptide reads, in one-letter code: Flap endonuclease (291 aa).

A helical arch region spans residues Tyr82 to Lys116. Lys83 contributes to the DNA binding site. Positions 130, 153, 155, and 201 each coordinate Mg(2+). Residues Asp188 to Phe224 form a DNA-binding; H3TH region. One can recognise a 5'-3' exonuclease domain in the interval Glu190 to Pro263. Positions 209 and 212 each coordinate K(+).

Mg(2+) serves as cofactor. The cofactor is K(+).

The catalysed reaction is Exonucleolytic cleavage in the 5'- to 3'-direction to yield nucleoside 5'-phosphates.. Its activity is regulated as follows. Inhibited by p-hydroxymercuribenzoate (PHMB). In terms of biological role, catalyzes both the 5'-exonucleolytic and structure-specific endonucleolytic hydrolysis of DNA branched nucleic acid molecules and probably plays a role in viral genome replication. Active on flap (branched duplex DNA containing a free single-stranded 5'-end), 5'overhangs and pseudo-Y structures. The substrates require a free, single-stranded 5' end, with endonucleolytic hydrolysis occurring at the junction of double- and single-stranded DNA. This function may be used for example to trim such branched molecules generated by Okazaki fragments synthesis during replication. This Escherichia phage T5 (Enterobacteria phage T5) protein is Flap endonuclease (D15).